Reading from the N-terminus, the 235-residue chain is Putative N-acetylmannosamine-6-phosphate 2-epimerase (235 aa).

It belongs to the NanE family.

It carries out the reaction an N-acyl-D-glucosamine 6-phosphate = an N-acyl-D-mannosamine 6-phosphate. It participates in amino-sugar metabolism; N-acetylneuraminate degradation; D-fructose 6-phosphate from N-acetylneuraminate: step 3/5. In terms of biological role, converts N-acetylmannosamine-6-phosphate (ManNAc-6-P) to N-acetylglucosamine-6-phosphate (GlcNAc-6-P). This chain is Putative N-acetylmannosamine-6-phosphate 2-epimerase, found in Edwardsiella ictaluri (strain 93-146).